Reading from the N-terminus, the 259-residue chain is 2,3-dihydroxy-2,3-dihydro-p-cumate dehydrogenase (259 aa).

An NAD(+)-binding site is contributed by 18–42 (VTGGAHGIGLGIVERLLGLGARVTA). Y163 functions as the Proton acceptor in the catalytic mechanism.

Belongs to the short-chain dehydrogenases/reductases (SDR) family.

The catalysed reaction is (2R,3S)-2,3-dihydroxy-2,3-dihydro-p-cumate + NAD(+) = 2,3-dihydroxy-p-cumate + NADH + H(+). It functions in the pathway aromatic compound metabolism; p-cumate degradation; acetaldehyde and pyruvate from p-cumate: step 2/7. The chain is 2,3-dihydroxy-2,3-dihydro-p-cumate dehydrogenase (cmtB) from Pseudomonas putida (strain ATCC 700007 / DSM 6899 / JCM 31910 / BCRC 17059 / LMG 24140 / F1).